The sequence spans 593 residues: NADH-quinone oxidoreductase subunit C/D (593 aa).

The interval Met-1–Gln-184 is NADH dehydrogenase I subunit C. The NADH dehydrogenase I subunit D stretch occupies residues Asp-208 to Arg-593.

In the N-terminal section; belongs to the complex I 30 kDa subunit family. It in the C-terminal section; belongs to the complex I 49 kDa subunit family. NDH-1 is composed of 13 different subunits. Subunits NuoB, CD, E, F, and G constitute the peripheral sector of the complex.

It localises to the cell inner membrane. The enzyme catalyses a quinone + NADH + 5 H(+)(in) = a quinol + NAD(+) + 4 H(+)(out). Its function is as follows. NDH-1 shuttles electrons from NADH, via FMN and iron-sulfur (Fe-S) centers, to quinones in the respiratory chain. The immediate electron acceptor for the enzyme in this species is believed to be ubiquinone. Couples the redox reaction to proton translocation (for every two electrons transferred, four hydrogen ions are translocated across the cytoplasmic membrane), and thus conserves the redox energy in a proton gradient. The protein is NADH-quinone oxidoreductase subunit C/D of Pseudomonas syringae pv. syringae (strain B728a).